We begin with the raw amino-acid sequence, 629 residues long: tRNA uridine 5-carboxymethylaminomethyl modification enzyme MnmG (629 aa).

FAD contacts are provided by residues 14 to 19 (GAGHAG), Val-126, and Ser-181. Position 273–287 (273–287 (GPRYCPSIEDKVVRF)) interacts with NAD(+). Gln-370 serves as a coordination point for FAD.

This sequence belongs to the MnmG family. As to quaternary structure, homodimer. Heterotetramer of two MnmE and two MnmG subunits. The cofactor is FAD.

The protein resides in the cytoplasm. Functionally, NAD-binding protein involved in the addition of a carboxymethylaminomethyl (cmnm) group at the wobble position (U34) of certain tRNAs, forming tRNA-cmnm(5)s(2)U34. This is tRNA uridine 5-carboxymethylaminomethyl modification enzyme MnmG from Geobacillus thermodenitrificans (strain NG80-2).